We begin with the raw amino-acid sequence, 339 residues long: Trace amine-associated receptor 1 (339 aa).

The Extracellular segment spans residues 1–25 (MMPFCHNIINISCVKNNWSNDVRAS). Intrachain disulfides connect Cys-5–Cys-178, Cys-13–Cys-88, and Cys-96–Cys-182. N-linked (GlcNAc...) asparagine glycosylation is found at Asn-10 and Asn-17. A helical transmembrane segment spans residues 26–46 (LYSLMVLIILTTLVGNLIVIV). At 47–59 (SISHFKELHTPTN) the chain is on the cytoplasmic side. Residues 60–80 (WLIHSMATVDFLPGCLVMPYS) traverse the membrane as a helical segment. Residues 81 to 98 (MVRSAEHCWYFGEVFCKI) are Extracellular-facing. A helical membrane pass occupies residues 99–119 (HTSTDIMLSSASIFHLSFISI). Asp-103 contacts 2-phenylethylamine. Over 120–136 (DRYYAVCDPLRYKAKIN) the chain is Cytoplasmic. Residues 137-157 (ILVICVMIFISWSVPAVFAFG) form a helical membrane-spanning segment. Topologically, residues 158 to 188 (MIFLELNFKGAEEIYYKHVHCRGGCSVFFSK) are extracellular. Residues 189–209 (ISGVLTFMTSFYIPGSIMLCV) traverse the membrane as a helical segment. The Cytoplasmic segment spans residues 210–252 (YYRIYLIAKEQARLINDANQKLQIGLEMKNGISQSKERKAVKT). Residues 253 to 273 (LGIVMGVFLICWCPFFICTVM) form a helical membrane-spanning segment. The Extracellular portion of the chain corresponds to 274 to 287 (DPFLHYIIPPTLND). Residues 288–308 (VLIWFGYLNSTFNPMVYAFFY) form a helical membrane-spanning segment. Residues 309 to 339 (PWFRKALKMMLFGKIFQKDSSRCKLFLELSS) lie on the Cytoplasmic side of the membrane.

Belongs to the G-protein coupled receptor 1 family.

Its subcellular location is the endomembrane system. The protein resides in the endoplasmic reticulum membrane. The protein localises to the cell membrane. In terms of biological role, intracellular G-protein coupled receptor for trace amines, which recognizes endogenous amine-containing metabolites such as beta-phenylethylamine (beta-PEA), 3-iodothyronamine (T1AM), isoamylamine (IAA), cadaverine (CAD), cyclohexylamine (CHA), p-tyramine (p-TYR), trimethylamine (TMA), octopamine and tryptamine. Also functions as a receptor for various drugs and psychoactive substances, such as amphetamine and methamphetamine. Unresponsive to classical biogenic amines, such as epinephrine and histamine and only partially activated by dopamine and serotonin. Expressed in both the central and peripheral nervous system: TAAR1 activation regulates the activity of several neurotransmitter signaling pathways by (1) decreasing the basal firing rates of the neurons involved and by (2) lowering the sensitivity of receptors to neurotransmitters. Ligand binding causes a conformation change that triggers signaling via guanine nucleotide-binding proteins (G proteins) and modulates the activity of downstream effectors. TAAR1 is coupled with different G(i)/G(o)-, G(s)- or G(q)/G(11) classes of G alpha proteins depending on the ligand. CAD-binding is coupled to G(i)/G(o) G alpha proteins and mediates inhibition of adenylate cyclase activity. T1AM- or beta-PEA-binding is coupled to G(s) G alpha proteins and mediates activation of adenylate cyclase activity. CHA- or IAA-binding is coupled to G(q)/G(11) G alpha proteins and activates phospholipase C-beta, releasing diacylglycerol (DAG) and inositol 1,4,5-trisphosphate (IP3) second messengers. TMA-binding is coupled with all three G(i)/G(o)-, G(s)- or G(q)/G(11) G alpha protein subtypes. This Pan troglodytes (Chimpanzee) protein is Trace amine-associated receptor 1 (TAAR1).